The sequence spans 113 residues: Putative pterin-4-alpha-carbinolamine dehydratase (113 aa).

This sequence belongs to the pterin-4-alpha-carbinolamine dehydratase family.

The enzyme catalyses (4aS,6R)-4a-hydroxy-L-erythro-5,6,7,8-tetrahydrobiopterin = (6R)-L-erythro-6,7-dihydrobiopterin + H2O. This Rickettsia bellii (strain OSU 85-389) protein is Putative pterin-4-alpha-carbinolamine dehydratase.